Consider the following 189-residue polypeptide: Sec-independent protein translocase protein TatB (189 aa).

Residues 1-21 form a helical membrane-spanning segment; sequence MFGVGIFEVLVILIVAVIALG. Positions 152–189 are disordered; sequence TQKPQNSIDSINSKESSVDSLHSPSIVESTQSSSSKDS. The segment covering 153–189 has biased composition (polar residues); sequence QKPQNSIDSINSKESSVDSLHSPSIVESTQSSSSKDS.

Belongs to the TatB family. In terms of assembly, the Tat system comprises two distinct complexes: a TatABC complex, containing multiple copies of TatA, TatB and TatC subunits, and a separate TatA complex, containing only TatA subunits. Substrates initially bind to the TatABC complex, which probably triggers association of the separate TatA complex to form the active translocon.

It is found in the cell inner membrane. Functionally, part of the twin-arginine translocation (Tat) system that transports large folded proteins containing a characteristic twin-arginine motif in their signal peptide across membranes. Together with TatC, TatB is part of a receptor directly interacting with Tat signal peptides. TatB may form an oligomeric binding site that transiently accommodates folded Tat precursor proteins before their translocation. The polypeptide is Sec-independent protein translocase protein TatB (Helicobacter hepaticus (strain ATCC 51449 / 3B1)).